Here is a 387-residue protein sequence, read N- to C-terminus: Alanine racemase (387 aa).

Lys-38 (proton acceptor; specific for D-alanine) is an active-site residue. Residue Lys-38 is modified to N6-(pyridoxal phosphate)lysine. Arg-136 contributes to the substrate binding site. The active-site Proton acceptor; specific for L-alanine is Tyr-267. Residue Met-316 coordinates substrate.

Belongs to the alanine racemase family. Pyridoxal 5'-phosphate serves as cofactor.

It carries out the reaction L-alanine = D-alanine. Its pathway is amino-acid biosynthesis; D-alanine biosynthesis; D-alanine from L-alanine: step 1/1. Catalyzes the interconversion of L-alanine and D-alanine. May also act on other amino acids. The sequence is that of Alanine racemase (alr) from Clostridium tetani (strain Massachusetts / E88).